A 151-amino-acid chain; its full sequence is D-aminoacyl-tRNA deacylase (151 aa).

Positions 136-137 (GP) match the Gly-cisPro motif, important for rejection of L-amino acids motif.

This sequence belongs to the DTD family. As to quaternary structure, homodimer.

It is found in the cytoplasm. The enzyme catalyses glycyl-tRNA(Ala) + H2O = tRNA(Ala) + glycine + H(+). The catalysed reaction is a D-aminoacyl-tRNA + H2O = a tRNA + a D-alpha-amino acid + H(+). Its function is as follows. An aminoacyl-tRNA editing enzyme that deacylates mischarged D-aminoacyl-tRNAs. Also deacylates mischarged glycyl-tRNA(Ala), protecting cells against glycine mischarging by AlaRS. Acts via tRNA-based rather than protein-based catalysis; rejects L-amino acids rather than detecting D-amino acids in the active site. By recycling D-aminoacyl-tRNA to D-amino acids and free tRNA molecules, this enzyme counteracts the toxicity associated with the formation of D-aminoacyl-tRNA entities in vivo and helps enforce protein L-homochirality. This chain is D-aminoacyl-tRNA deacylase, found in Lactococcus lactis subsp. cremoris (strain SK11).